A 143-amino-acid chain; its full sequence is Large ribosomal subunit protein uL15 (143 aa).

A disordered region spans residues 1 to 59; sequence MELNGIKPADGAKHYKRRVGRGIGSGIGKTAGRGHKGQKSRAGGYHKVGFEGGQMPMQR. Positions 21–31 are enriched in gly residues; it reads RGIGSGIGKTA.

The protein belongs to the universal ribosomal protein uL15 family. In terms of assembly, part of the 50S ribosomal subunit.

Functionally, binds to the 23S rRNA. The chain is Large ribosomal subunit protein uL15 from Albidiferax ferrireducens (strain ATCC BAA-621 / DSM 15236 / T118) (Rhodoferax ferrireducens).